A 95-amino-acid polypeptide reads, in one-letter code: Large ribosomal subunit protein bL28 (95 aa).

The segment at 1 to 22 is disordered; that stretch reads MSRRCELTGKGPMTGNNVSHAN.

The protein belongs to the bacterial ribosomal protein bL28 family.

The sequence is that of Large ribosomal subunit protein bL28 from Ruegeria pomeroyi (strain ATCC 700808 / DSM 15171 / DSS-3) (Silicibacter pomeroyi).